Here is a 341-residue protein sequence, read N- to C-terminus: L-threonine 3-dehydrogenase (341 aa).

Zn(2+) is bound at residue C38. Active-site charge relay system residues include T40 and H43. Residues H63, E64, C93, C96, C99, and C107 each contribute to the Zn(2+) site. NAD(+)-binding positions include I175, D195, R200, 262–264 (LGI), and 286–287 (IY).

It belongs to the zinc-containing alcohol dehydrogenase family. As to quaternary structure, homotetramer. The cofactor is Zn(2+).

Its subcellular location is the cytoplasm. It catalyses the reaction L-threonine + NAD(+) = (2S)-2-amino-3-oxobutanoate + NADH + H(+). Its pathway is amino-acid degradation; L-threonine degradation via oxydo-reductase pathway; glycine from L-threonine: step 1/2. In terms of biological role, catalyzes the NAD(+)-dependent oxidation of L-threonine to 2-amino-3-ketobutyrate. The chain is L-threonine 3-dehydrogenase from Pseudoalteromonas translucida (strain TAC 125).